A 208-amino-acid polypeptide reads, in one-letter code: Fibroblast growth factor 6 (208 aa).

Positions 1-37 (MALGQKLFITMSRGAGRLQGTLWALVFLGILVGMVVP) are cleaved as a signal peptide. N45 carries an N-linked (GlcNAc...) asparagine glycan. C90 and C157 are oxidised to a cystine.

This sequence belongs to the heparin-binding growth factors family. As to quaternary structure, interacts with FGFR1, FGFR2 and FGFR4. Affinity between fibroblast growth factors (FGFs) and their receptors is increased by heparan sulfate glycosaminoglycans that function as coreceptors. In terms of tissue distribution, leukemia cell lines with platelet/ megakaryocytic differentiation potential.

The protein localises to the secreted. The protein resides in the extracellular space. Functionally, plays an important role in the regulation of cell proliferation, cell differentiation, angiogenesis and myogenesis, and is required for normal muscle regeneration. This Homo sapiens (Human) protein is Fibroblast growth factor 6 (FGF6).